We begin with the raw amino-acid sequence, 188 residues long: Ribosome maturation factor RimM (188 aa).

Positions 98-171 (EGEFFQGDLV…RIVIHPPEYV (74 aa)) constitute a PRC barrel domain.

This sequence belongs to the RimM family. As to quaternary structure, binds ribosomal protein uS19.

It is found in the cytoplasm. An accessory protein needed during the final step in the assembly of 30S ribosomal subunit, possibly for assembly of the head region. Essential for efficient processing of 16S rRNA. May be needed both before and after RbfA during the maturation of 16S rRNA. It has affinity for free ribosomal 30S subunits but not for 70S ribosomes. The sequence is that of Ribosome maturation factor RimM from Myxococcus xanthus (strain DK1622).